The following is a 357-amino-acid chain: UDP-N-acetylglucosamine--N-acetylmuramyl-(pentapeptide) pyrophosphoryl-undecaprenol N-acetylglucosamine transferase (357 aa).

The UDP-N-acetyl-alpha-D-glucosamine site is built by arginine 166, serine 196, and glutamine 290.

Belongs to the glycosyltransferase 28 family. MurG subfamily.

It localises to the cell membrane. The catalysed reaction is Mur2Ac(oyl-L-Ala-gamma-D-Glu-L-Lys-D-Ala-D-Ala)-di-trans,octa-cis-undecaprenyl diphosphate + UDP-N-acetyl-alpha-D-glucosamine = beta-D-GlcNAc-(1-&gt;4)-Mur2Ac(oyl-L-Ala-gamma-D-Glu-L-Lys-D-Ala-D-Ala)-di-trans,octa-cis-undecaprenyl diphosphate + UDP + H(+). Its pathway is cell wall biogenesis; peptidoglycan biosynthesis. Its function is as follows. Cell wall formation. Catalyzes the transfer of a GlcNAc subunit on undecaprenyl-pyrophosphoryl-MurNAc-pentapeptide (lipid intermediate I) to form undecaprenyl-pyrophosphoryl-MurNAc-(pentapeptide)GlcNAc (lipid intermediate II). The chain is UDP-N-acetylglucosamine--N-acetylmuramyl-(pentapeptide) pyrophosphoryl-undecaprenol N-acetylglucosamine transferase from Staphylococcus epidermidis (strain ATCC 35984 / DSM 28319 / BCRC 17069 / CCUG 31568 / BM 3577 / RP62A).